The primary structure comprises 170 residues: NADH-quinone oxidoreductase subunit B (170 aa).

4 residues coordinate [4Fe-4S] cluster: C37, C38, C102, and C131.

Belongs to the complex I 20 kDa subunit family. NDH-1 is composed of 14 different subunits. Subunits NuoB, C, D, E, F, and G constitute the peripheral sector of the complex. [4Fe-4S] cluster is required as a cofactor.

It is found in the cell inner membrane. The catalysed reaction is a quinone + NADH + 5 H(+)(in) = a quinol + NAD(+) + 4 H(+)(out). In terms of biological role, NDH-1 shuttles electrons from NADH, via FMN and iron-sulfur (Fe-S) centers, to quinones in the respiratory chain. The immediate electron acceptor for the enzyme in this species is believed to be ubiquinone. Couples the redox reaction to proton translocation (for every two electrons transferred, four hydrogen ions are translocated across the cytoplasmic membrane), and thus conserves the redox energy in a proton gradient. In Geobacter sp. (strain M21), this protein is NADH-quinone oxidoreductase subunit B.